Reading from the N-terminus, the 96-residue chain is Glutamyl-tRNA(Gln) amidotransferase subunit C (96 aa).

Belongs to the GatC family. In terms of assembly, heterotrimer of A, B and C subunits.

The enzyme catalyses L-glutamyl-tRNA(Gln) + L-glutamine + ATP + H2O = L-glutaminyl-tRNA(Gln) + L-glutamate + ADP + phosphate + H(+). The catalysed reaction is L-aspartyl-tRNA(Asn) + L-glutamine + ATP + H2O = L-asparaginyl-tRNA(Asn) + L-glutamate + ADP + phosphate + 2 H(+). In terms of biological role, allows the formation of correctly charged Asn-tRNA(Asn) or Gln-tRNA(Gln) through the transamidation of misacylated Asp-tRNA(Asn) or Glu-tRNA(Gln) in organisms which lack either or both of asparaginyl-tRNA or glutaminyl-tRNA synthetases. The reaction takes place in the presence of glutamine and ATP through an activated phospho-Asp-tRNA(Asn) or phospho-Glu-tRNA(Gln). The chain is Glutamyl-tRNA(Gln) amidotransferase subunit C from Neisseria meningitidis serogroup B (strain ATCC BAA-335 / MC58).